A 263-amino-acid chain; its full sequence is Small ribosomal subunit protein uS15m (263 aa).

Residues 1–70 (MVLKSVFRST…VRQYARPSRK (70 aa)) constitute a mitochondrion transit peptide. Residues 238 to 251 (EREKQKAEEAERKK) are compositionally biased toward basic and acidic residues. A disordered region spans residues 238–263 (EREKQKAEEAERKKSSSSTNPQETAA).

Belongs to the universal ribosomal protein uS15 family. As to quaternary structure, component of the mitochondrial ribosome small subunit (28S) which comprises a 12S rRNA and about 30 distinct proteins.

It is found in the mitochondrion. This chain is Small ribosomal subunit protein uS15m (mrps15), found in Danio rerio (Zebrafish).